Reading from the N-terminus, the 488-residue chain is Cis-aconitate decarboxylase (488 aa).

This sequence belongs to the PrpD family. As to quaternary structure, homodimer. As to expression, expressed in LPS-tolerized macrophages (at protein level). Expressed in the luminal epithelial cells of pregnant uterus. Expressed in microglia and macrophage cells.

The protein localises to the mitochondrion. It catalyses the reaction cis-aconitate + H(+) = itaconate + CO2. In terms of biological role, cis-aconitate decarboxylase that catalyzes production of itaconate and is involved in the inhibition of the inflammatory response. Acts as a negative regulator of the Toll-like receptors (TLRs)-mediated inflammatory innate response by stimulating the tumor necrosis factor alpha-induced protein TNFAIP3 expression via reactive oxygen species (ROS) in LPS-tolerized macrophages. Involved in antimicrobial response of innate immune cells; ACOD1-mediated itaconic acid production contributes to the antimicrobial activity of macrophages by generating itaconate, leading to alkylation of proteins, such as TFEB. Involved in antiviral response following infection by flavivirus in neurons: ACOD1-mediated itaconate production inhibits the activity of succinate dehydrogenase, generating a metabolic state in neurons that suppresses replication of viral genomes. Plays a role in the embryo implantation. The polypeptide is Cis-aconitate decarboxylase (Mus musculus (Mouse)).